Consider the following 192-residue polypeptide: NADH-quinone oxidoreductase subunit B (192 aa).

Positions 71, 72, 136, and 166 each coordinate [4Fe-4S] cluster.

It belongs to the complex I 20 kDa subunit family. In terms of assembly, NDH-1 is composed of 14 different subunits. Subunits NuoB, C, D, E, F, and G constitute the peripheral sector of the complex. [4Fe-4S] cluster is required as a cofactor.

It localises to the cell inner membrane. It carries out the reaction a quinone + NADH + 5 H(+)(in) = a quinol + NAD(+) + 4 H(+)(out). In terms of biological role, NDH-1 shuttles electrons from NADH, via FMN and iron-sulfur (Fe-S) centers, to quinones in the respiratory chain. The immediate electron acceptor for the enzyme in this species is believed to be ubiquinone. Couples the redox reaction to proton translocation (for every two electrons transferred, four hydrogen ions are translocated across the cytoplasmic membrane), and thus conserves the redox energy in a proton gradient. The polypeptide is NADH-quinone oxidoreductase subunit B (Sinorhizobium medicae (strain WSM419) (Ensifer medicae)).